An 88-amino-acid chain; its full sequence is MISKQEKKLLVKKYGKNEKDTGNAFVQVALLTHDIEKLKPHFQANPKDFHSRRGFLAKITQRKTLLAYLKKNDPETYLKCLEEFKLRK.

Belongs to the universal ribosomal protein uS15 family. In terms of assembly, part of the 30S ribosomal subunit. Forms a bridge to the 50S subunit in the 70S ribosome, contacting the 23S rRNA.

Functionally, one of the primary rRNA binding proteins, it binds directly to 16S rRNA where it helps nucleate assembly of the platform of the 30S subunit by binding and bridging several RNA helices of the 16S rRNA. In terms of biological role, forms an intersubunit bridge (bridge B4) with the 23S rRNA of the 50S subunit in the ribosome. The protein is Small ribosomal subunit protein uS15 of Mycoplasmopsis synoviae (strain 53) (Mycoplasma synoviae).